Reading from the N-terminus, the 178-residue chain is Ribosome maturation factor RimP (178 aa).

It belongs to the RimP family.

Its subcellular location is the cytoplasm. Required for maturation of 30S ribosomal subunits. This chain is Ribosome maturation factor RimP, found in Streptococcus pyogenes serotype M5 (strain Manfredo).